The sequence spans 423 residues: Gamma-glutamyl phosphate reductase (423 aa).

Belongs to the gamma-glutamyl phosphate reductase family.

It is found in the cytoplasm. The enzyme catalyses L-glutamate 5-semialdehyde + phosphate + NADP(+) = L-glutamyl 5-phosphate + NADPH + H(+). The protein operates within amino-acid biosynthesis; L-proline biosynthesis; L-glutamate 5-semialdehyde from L-glutamate: step 2/2. Functionally, catalyzes the NADPH-dependent reduction of L-glutamate 5-phosphate into L-glutamate 5-semialdehyde and phosphate. The product spontaneously undergoes cyclization to form 1-pyrroline-5-carboxylate. This chain is Gamma-glutamyl phosphate reductase, found in Paraburkholderia phymatum (strain DSM 17167 / CIP 108236 / LMG 21445 / STM815) (Burkholderia phymatum).